The chain runs to 623 residues: Immunity-related GTPase family Q protein (623 aa).

Cysteine 152 and cysteine 158 are joined by a disulfide. Residues 155 to 180 (SDGCEELERLRAALQSQAEALRRLLP) adopt a coiled-coil conformation. The LIR 1 signature appears at 186-189 (FEVL). Threonine 203 carries the phosphothreonine modification. The IRG-type G domain occupies 223 to 449 (ARLDLAVAGK…PGLCEWLRRA (227 aa)). A disordered region spans residues 334–393 (EGEDPECLGEGKMENPKGESLKNAGGGGLENALSKGREKCSAGSQKAGSGEGPGKAGSEG). Positions 342–353 (GEGKMENPKGES) are enriched in basic and acidic residues. Positions 421 to 424 (WEVL) match the LIR 2 motif.

It belongs to the TRAFAC class dynamin-like GTPase superfamily. IRG family. As to quaternary structure, interacts (via LIR motif 1) with GABARAPL2. Interacts (via LIR motif 2) with MAP1LC3B/LC3B.

The protein resides in the lysosome. Its subcellular location is the cytoplasmic vesicle. The protein localises to the autophagosome. Functionally, autophagy receptor that specifically promotes clearance of misfolded MHC class I molecules by targeting them to the lysosome for degradation. Acts as a molecular adapter that specifically recognizes and binds (1) misfolded MHC class I molecules following their ubiquitination, as well as (2) autophagy-related proteins, promoting the recruitment of misfolded MHC class I molecules to autophagy machinery for degradation. Degradation of misfolded MHC class I molecules is essential to prevent accumulation of defective MHC class I complexes at the surface of CD8(+) T-cells and prevent a stronger T-cell-mediated response. In contrast to other members of the family, does not show GTPase activity. The chain is Immunity-related GTPase family Q protein from Homo sapiens (Human).